The chain runs to 456 residues: N(6)-adenosine-methyltransferase non-catalytic subunit METTL14 (456 aa).

The interval 50–75 is disordered; sequence TCRASYDTSAPNAKRKYLDEGETDED. Interaction with METTL3 regions lie at residues 135 to 136 and 237 to 238; these read RD and SG. The segment at 245–254 is positively charged region required for RNA-binding; it reads RVCLRKWGYR. Interaction with METTL3 stretches follow at residues 255-258 and 278-287; these read RCED and KAVFQRTKEH. Residues 297–298 are positively charged region required for RNA-binding; that stretch reads KR. Residues 308–312 are interaction with METTL3; sequence NVDID. The interval 393 to 456 is disordered; that stretch reads ERLRPKSPPP…GAHRGGFPPR (64 aa). At Ser-399 the chain carries Phosphoserine. Residues 409–423 are compositionally biased toward gly residues; that stretch reads GGGAPRGGGRGGTSA. Over residues 425–440 the composition is skewed to basic and acidic residues; sequence RGRERNRSNFRGERGG. Over residues 441-450 the composition is skewed to gly residues; the sequence is FRGGRGGAHR.

It belongs to the MT-A70-like family. Heterodimer; heterodimerizes with METTL3 to form an antiparallel heterodimer that constitutes an active methyltransferase. Component of the WMM complex, a N6-methyltransferase complex composed of a catalytic subcomplex, named MAC, and of an associated subcomplex, named MACOM. The MAC subcomplex is composed of METTL3 and METTL14. The MACOM subcomplex is composed of WTAP, ZC3H13, CBLL1/HAKAI, VIRMA, and, in some cases of RBM15 (RBM15 or RBM15B).

Its subcellular location is the nucleus. Its function is as follows. The METTL3-METTL14 heterodimer forms a N6-methyltransferase complex that methylates adenosine residues at the N(6) position of some mRNAs and regulates the circadian clock, differentiation of embryonic stem cells and cortical neurogenesis. In the heterodimer formed with METTL3, METTL14 constitutes the RNA-binding scaffold that recognizes the substrate rather than the catalytic core. N6-methyladenosine (m6A), which takes place at the 5'-[AG]GAC-3' consensus sites of some mRNAs, plays a role in mRNA stability and processing. M6A acts as a key regulator of mRNA stability by promoting mRNA destabilization and degradation. In embryonic stem cells (ESCs), m6A methylation of mRNAs encoding key naive pluripotency-promoting transcripts results in transcript destabilization. M6A regulates spermatogonial differentiation and meiosis and is essential for male fertility and spermatogenesis. M6A also regulates cortical neurogenesis: m6A methylation of transcripts related to transcription factors, neural stem cells, the cell cycle and neuronal differentiation during brain development promotes their destabilization and decay, promoting differentiation of radial glial cells. The polypeptide is N(6)-adenosine-methyltransferase non-catalytic subunit METTL14 (Homo sapiens (Human)).